We begin with the raw amino-acid sequence, 430 residues long: Adenylosuccinate synthetase (430 aa).

GTP-binding positions include 17–23 (GDEGKGK) and 45–47 (GHT). Catalysis depends on Asp-18, which acts as the Proton acceptor. Mg(2+) is bound by residues Asp-18 and Gly-45. Residues 18 to 21 (DEGK), 43 to 46 (NAGH), Thr-139, Arg-153, Asn-229, Thr-244, and Arg-308 contribute to the IMP site. Catalysis depends on His-46, which acts as the Proton donor. 304-310 (TVTGRRR) is a binding site for substrate. Residues Arg-310, 336-338 (KLD), and 418-420 (GVG) contribute to the GTP site.

It belongs to the adenylosuccinate synthetase family. In terms of assembly, homodimer. It depends on Mg(2+) as a cofactor.

It is found in the cytoplasm. It carries out the reaction IMP + L-aspartate + GTP = N(6)-(1,2-dicarboxyethyl)-AMP + GDP + phosphate + 2 H(+). It functions in the pathway purine metabolism; AMP biosynthesis via de novo pathway; AMP from IMP: step 1/2. Plays an important role in the de novo pathway and in the salvage pathway of purine nucleotide biosynthesis. Catalyzes the first committed step in the biosynthesis of AMP from IMP. In Cryptococcus neoformans var. neoformans serotype D (strain B-3501A) (Filobasidiella neoformans), this protein is Adenylosuccinate synthetase.